The primary structure comprises 254 residues: Lipid uptake coordinator A (254 aa).

Helical transmembrane passes span 5–25, 44–64, 85–105, and 114–134; these read VAVL…FYFV, LRIA…FTLL, IMAH…EVWL, and LFGI…GFYL. Residues 143 to 254 form a disordered region; it reads PPPKPLKPKK…SGVQVAKVDE (112 aa). The span at 148–163 shows a compositional bias: basic residues; that stretch reads LKPKKPKQRRLRRKKT. Over residues 169-191 the composition is skewed to acidic residues; the sequence is AEPEAAEEAENTELAAQEDEEAV. The segment covering 192–220 has biased composition (low complexity); sequence EAPPESIESPGGEPESATREAPAAETATA. Over residues 227 to 244 the composition is skewed to basic residues; it reads LRNRRPTGKTSHRRRRTR.

In terms of assembly, interacts with the Mce1 and Mce4 accessory subunits Rv0199/OmamA, Rv0177/Mam1C and Rv3492c/Mam4B.

The protein resides in the cell membrane. Its function is as follows. Required for the import of both fatty acids and cholesterol during growth in macrophages and in axenic culture. Facilitates the uptake of these lipids by stabilizing protein subunits of the Mce1 and Mce4 multi-subunit transporters, which transport fatty acids and cholesterol, respectively. Required for full virulence in vivo. This is Lipid uptake coordinator A from Mycobacterium tuberculosis (strain ATCC 25618 / H37Rv).